A 173-amino-acid chain; its full sequence is Adenine phosphoribosyltransferase (173 aa).

This sequence belongs to the purine/pyrimidine phosphoribosyltransferase family. As to quaternary structure, homodimer.

The protein localises to the cytoplasm. It carries out the reaction AMP + diphosphate = 5-phospho-alpha-D-ribose 1-diphosphate + adenine. The protein operates within purine metabolism; AMP biosynthesis via salvage pathway; AMP from adenine: step 1/1. Catalyzes a salvage reaction resulting in the formation of AMP, that is energically less costly than de novo synthesis. The sequence is that of Adenine phosphoribosyltransferase from Macrococcus caseolyticus (strain JCSC5402) (Macrococcoides caseolyticum).